Here is a 152-residue protein sequence, read N- to C-terminus: uncharacterized protein (152 aa).

The protein belongs to the antirestriction protein family.

This is an uncharacterized protein from Escherichia coli (strain K12).